Here is an 832-residue protein sequence, read N- to C-terminus: Protein P (832 aa).

Positions 1–177 (MPLSYQHFRR…FCGSPYSWEQ (177 aa)) are terminal protein domain (TP). A spacer region spans residues 178 to 335 (ELQHGAESFH…YCLSHIVNLL (158 aa)). Residues 186-229 (FHQQSSGILSRPPVGSSLQSKHSKSRLGLQSQQGHLARRQQGRS) are disordered. A polymerase/reverse transcriptase domain (RT) region spans residues 336–679 (EDWGPCAEHG…YLNLYPVARQ (344 aa)). A Reverse transcriptase domain is found at 346–589 (EHHIRTPRTP…YSLNFMGYVI (244 aa)). 3 residues coordinate Mg(2+): Asp418, Asp540, and Asp541.

It belongs to the hepadnaviridae P protein family.

The enzyme catalyses DNA(n) + a 2'-deoxyribonucleoside 5'-triphosphate = DNA(n+1) + diphosphate. It carries out the reaction Endonucleolytic cleavage to 5'-phosphomonoester.. Activated by host HSP70 and HSP40 in vitro to be able to bind the epsilon loop of the pgRNA. Because deletion of the RNase H region renders the protein partly chaperone-independent, the chaperones may be needed indirectly to relieve occlusion of the RNA-binding site by this domain. Inhibited by several reverse-transcriptase inhibitors: Lamivudine, Adefovir and Entecavir. Its function is as follows. Multifunctional enzyme that converts the viral RNA genome into dsDNA in viral cytoplasmic capsids. This enzyme displays a DNA polymerase activity that can copy either DNA or RNA templates, and a ribonuclease H (RNase H) activity that cleaves the RNA strand of RNA-DNA heteroduplexes in a partially processive 3'- to 5'-endonucleasic mode. Neo-synthesized pregenomic RNA (pgRNA) are encapsidated together with the P protein, and reverse-transcribed inside the nucleocapsid. Initiation of reverse-transcription occurs first by binding the epsilon loop on the pgRNA genome, and is initiated by protein priming, thereby the 5'-end of (-)DNA is covalently linked to P protein. Partial (+)DNA is synthesized from the (-)DNA template and generates the relaxed circular DNA (RC-DNA) genome. After budding and infection, the RC-DNA migrates in the nucleus, and is converted into a plasmid-like covalently closed circular DNA (cccDNA). The activity of P protein does not seem to be necessary for cccDNA generation, and is presumably released from (+)DNA by host nuclear DNA repair machinery. This chain is Protein P, found in Hepatitis B virus genotype D (isolate Germany/1-91/1991) (HBV-D).